A 194-amino-acid chain; its full sequence is MKEIILATSNPGKIKELEQLLAPTICIPQADLGIFDAEETGLSFIENAILKARHASSLANKPALADDSGLVVPSLNGEPGIYSARYAGRKANDEDNIQQLLSKMADLSQEQRQAYFFCAIALMQHAKDPTPIIATGIFHGIISVKPSGTNGFGYDPVFYLNEYQCTAAELPAKIKNRISHRAKALNQLRALLPD.

8 to 13 lines the substrate pocket; sequence TSNPGK. 2 residues coordinate Mg(2+): E38 and D67. D67 functions as the Proton acceptor in the catalytic mechanism. Substrate contacts are provided by residues S68, 152 to 155, K175, and 180 to 181; these read FGYD and HR.

Belongs to the HAM1 NTPase family. In terms of assembly, homodimer. Requires Mg(2+) as cofactor.

It carries out the reaction XTP + H2O = XMP + diphosphate + H(+). The catalysed reaction is dITP + H2O = dIMP + diphosphate + H(+). The enzyme catalyses ITP + H2O = IMP + diphosphate + H(+). Its function is as follows. Pyrophosphatase that catalyzes the hydrolysis of nucleoside triphosphates to their monophosphate derivatives, with a high preference for the non-canonical purine nucleotides XTP (xanthosine triphosphate), dITP (deoxyinosine triphosphate) and ITP. Seems to function as a house-cleaning enzyme that removes non-canonical purine nucleotides from the nucleotide pool, thus preventing their incorporation into DNA/RNA and avoiding chromosomal lesions. This Legionella pneumophila (strain Paris) protein is dITP/XTP pyrophosphatase.